The sequence spans 398 residues: Growth-regulating factor 3 (398 aa).

Low complexity predominate over residues 1 to 17 (MDLQLKQWRSQQQQQHQ). The tract at residues 1–32 (MDLQLKQWRSQQQQQHQTESEEQPSAAKIPKH) is disordered. A QLQ domain is found at 76–111 (FFSWAQWQELELQALIYRYMLAGAAVPQELLLPIKK). The WRC domain occupies 144-188 (DPEPGRCRRTDGKKWRCSRDVFAGHKYCERHMHRGRNRSRKPVET). 2 short sequence motifs (bipartite nuclear localization signal) span residues 149-159 (RCRRTDGKKWR) and 177-184 (RGRNRSRK). Polar residues-rich tracts occupy residues 299–350 (SLQE…RDQQ) and 383–398 (PTSV…QAFH). The interval 299 to 398 (SLQEADNSSS…QLGVSTQAFH (100 aa)) is disordered.

Belongs to the GRF family. Strongly expressed in actively growing and developing tissues, such as roots, upper stems, and shoot tips containing the shoot apical meristem (SAM) and flower buds. Also expressed in mature flowers, but weakly expressed in mature stems and leaves.

The protein localises to the nucleus. Transcription activator that plays a role in the regulation of cell expansion in leaf and cotyledons tissues. Component of a network formed by miR396, the GRFs and their interacting factors (GIFs) acting in the regulation of meristem function, at least partially through the control of cell proliferation. microRNA396-GRF1/GRF3 regulatory module acts as a developmental regulator in the reprogramming of root cells during cyst nematode infection, leading to the formation of the syncytium. The chain is Growth-regulating factor 3 (GRF3) from Arabidopsis thaliana (Mouse-ear cress).